Reading from the N-terminus, the 554-residue chain is Myo-inositol transporter 1 (554 aa).

The span at methionine 1–threonine 13 shows a compositional bias: polar residues. Positions methionine 1–glutamate 57 are disordered. N-linked (GlcNAc...) asparagine glycans are attached at residues asparagine 6 and asparagine 22. The span at serine 15–serine 34 shows a compositional bias: low complexity. Residues asparagine 44–glutamate 57 show a composition bias toward polar residues. The next 6 helical transmembrane spans lie at methionine 65 to glycine 85, phenylalanine 110 to alanine 130, isoleucine 144 to alanine 164, phenylalanine 167 to leucine 187, leucine 196 to tryptophan 216, and valine 227 to proline 247. An N-linked (GlcNAc...) asparagine glycan is attached at asparagine 279. Residues glycine 313–glycine 332 traverse the membrane as a helical segment. Asparagine 351 is a glycosylation site (N-linked (GlcNAc...) asparagine). 5 helical membrane passes run alanine 354–isoleucine 374, isoleucine 382–histidine 402, glycine 420–isoleucine 440, isoleucine 459–phenylalanine 479, and glycine 490–leucine 510.

The protein belongs to the major facilitator superfamily. Sugar transporter (TC 2.A.1.1) family.

Its subcellular location is the cell membrane. The enzyme catalyses myo-inositol(out) + H(+)(out) = myo-inositol(in) + H(+)(in). Functionally, major transporter for myo-inositol. This Candida albicans (strain SC5314 / ATCC MYA-2876) (Yeast) protein is Myo-inositol transporter 1.